The following is an 828-amino-acid chain: Periplasmic nitrate reductase (828 aa).

Positions 1 to 31 form a signal peptide, tat-type signal; that stretch reads MKLSRRSFMKANAVAAAAAAAGLSVPGVARA. The 57-residue stretch at 39 to 95 folds into the 4Fe-4S Mo/W bis-MGD-type domain; that stretch reads IKWDKAPCRFCGTGCGVLVGTQQGRVVACQGDPDAPVNRGLNCIKGYFLPKIMYGKD. Residues Cys-46, Cys-49, Cys-53, and Cys-81 each contribute to the [4Fe-4S] cluster site. Mo-bis(molybdopterin guanine dinucleotide) contacts are provided by residues Lys-83, Gln-150, Asn-175, Cys-179, 212–219, 243–247, 262–264, Met-372, Gln-376, Asn-482, 508–509, Lys-531, Asp-558, and 718–727; these read WGSNMAEM, STFQH, QSD, SD, and TGRVLEHWHT. Phe-794 lines the substrate pocket. Mo-bis(molybdopterin guanine dinucleotide) is bound by residues Asn-802 and Lys-819.

Belongs to the prokaryotic molybdopterin-containing oxidoreductase family. NasA/NapA/NarB subfamily. In terms of assembly, component of the periplasmic nitrate reductase NapAB complex composed of NapA and NapB. [4Fe-4S] cluster serves as cofactor. The cofactor is Mo-bis(molybdopterin guanine dinucleotide). Predicted to be exported by the Tat system. The position of the signal peptide cleavage has not been experimentally proven.

The protein resides in the periplasm. It catalyses the reaction 2 Fe(II)-[cytochrome] + nitrate + 2 H(+) = 2 Fe(III)-[cytochrome] + nitrite + H2O. Its function is as follows. Catalytic subunit of the periplasmic nitrate reductase complex NapAB. Receives electrons from NapB and catalyzes the reduction of nitrate to nitrite. The sequence is that of Periplasmic nitrate reductase from Salmonella arizonae (strain ATCC BAA-731 / CDC346-86 / RSK2980).